A 330-amino-acid polypeptide reads, in one-letter code: N-acetyl-gamma-glutamyl-phosphate reductase (330 aa).

The active site involves cysteine 155.

Belongs to the NAGSA dehydrogenase family. Type 1 subfamily.

It is found in the cytoplasm. The catalysed reaction is N-acetyl-L-glutamate 5-semialdehyde + phosphate + NADP(+) = N-acetyl-L-glutamyl 5-phosphate + NADPH + H(+). It participates in amino-acid biosynthesis; L-arginine biosynthesis; N(2)-acetyl-L-ornithine from L-glutamate: step 3/4. Its function is as follows. Catalyzes the NADPH-dependent reduction of N-acetyl-5-glutamyl phosphate to yield N-acetyl-L-glutamate 5-semialdehyde. This is N-acetyl-gamma-glutamyl-phosphate reductase from Shewanella halifaxensis (strain HAW-EB4).